The sequence spans 261 residues: Enoyl-[acyl-carrier-protein] reductase [NADH] FabI (261 aa).

Residues Gly-15, 21-22 (SI), Gln-42, 66-67 (DV), and Met-94 contribute to the NAD(+) site. Residue Ala-97 coordinates substrate. Active-site proton acceptor residues include Tyr-147 and Tyr-157. Residues Lys-164 and 193–197 (IKTLA) each bind NAD(+).

Belongs to the short-chain dehydrogenases/reductases (SDR) family. FabI subfamily. In terms of assembly, homotetramer.

It carries out the reaction a 2,3-saturated acyl-[ACP] + NAD(+) = a (2E)-enoyl-[ACP] + NADH + H(+). It functions in the pathway lipid metabolism; fatty acid biosynthesis. Its function is as follows. Catalyzes the reduction of a carbon-carbon double bond in an enoyl moiety that is covalently linked to an acyl carrier protein (ACP). Involved in the elongation cycle of fatty acid which are used in the lipid metabolism. This Rickettsia prowazekii (strain Madrid E) protein is Enoyl-[acyl-carrier-protein] reductase [NADH] FabI (fabI).